A 336-amino-acid chain; its full sequence is Fructose-1,6-bisphosphatase class 1 (336 aa).

Mg(2+) is bound by residues Glu90, Asp112, Leu114, and Asp115. Residues 115 to 118 (DGSS), Asn207, and Lys273 contribute to the substrate site. Glu279 lines the Mg(2+) pocket.

The protein belongs to the FBPase class 1 family. In terms of assembly, homotetramer. It depends on Mg(2+) as a cofactor.

The protein localises to the cytoplasm. The catalysed reaction is beta-D-fructose 1,6-bisphosphate + H2O = beta-D-fructose 6-phosphate + phosphate. It participates in carbohydrate biosynthesis; gluconeogenesis. The protein is Fructose-1,6-bisphosphatase class 1 of Xanthomonas euvesicatoria pv. vesicatoria (strain 85-10) (Xanthomonas campestris pv. vesicatoria).